Here is a 262-residue protein sequence, read N- to C-terminus: Carbonic anhydrase 13 (262 aa).

Residues 4–261 enclose the Alpha-carbonic anhydrase domain; that stretch reads LSWGYGEHNG…LKGRRVRASF (258 aa). His65 (proton donor/acceptor) is an active-site residue. Positions 95, 97, and 120 each coordinate Zn(2+). 200 to 201 contributes to the substrate binding site; it reads TV.

The protein belongs to the alpha-carbonic anhydrase family. It depends on Zn(2+) as a cofactor. Expressed in spleen, lung, kidney, heart, brain, skeletal muscle and testis.

It carries out the reaction hydrogencarbonate + H(+) = CO2 + H2O. Inhibited by coumarins, sulfonamide derivatives such as acetazolamide (AZA) and Foscarnet (phosphonoformate trisodium salt). Functionally, reversible hydration of carbon dioxide. The sequence is that of Carbonic anhydrase 13 (Ca13) from Mus musculus (Mouse).